The chain runs to 332 residues: Glycerol-3-phosphate dehydrogenase [NAD(P)+] (332 aa).

Residues Ser11, Phe12, Lys32, and Lys106 each coordinate NADPH. Residues Lys106, Gly137, and Ser139 each contribute to the sn-glycerol 3-phosphate site. Residue Ala141 participates in NADPH binding. 5 residues coordinate sn-glycerol 3-phosphate: Lys192, Asp245, Ser255, Arg256, and Asn257. Residue Lys192 is the Proton acceptor of the active site. Arg256 contributes to the NADPH binding site. The NADPH site is built by Val280 and Glu282.

Belongs to the NAD-dependent glycerol-3-phosphate dehydrogenase family.

Its subcellular location is the cytoplasm. The enzyme catalyses sn-glycerol 3-phosphate + NAD(+) = dihydroxyacetone phosphate + NADH + H(+). The catalysed reaction is sn-glycerol 3-phosphate + NADP(+) = dihydroxyacetone phosphate + NADPH + H(+). Its pathway is membrane lipid metabolism; glycerophospholipid metabolism. In terms of biological role, catalyzes the reduction of the glycolytic intermediate dihydroxyacetone phosphate (DHAP) to sn-glycerol 3-phosphate (G3P), the key precursor for phospholipid synthesis. This Staphylococcus aureus (strain Mu3 / ATCC 700698) protein is Glycerol-3-phosphate dehydrogenase [NAD(P)+].